Here is a 935-residue protein sequence, read N- to C-terminus: Potassium channel AKT1 (935 aa).

The Cytoplasmic portion of the chain corresponds to 1–106 (MARWGAARMA…YDRRYRIWET (106 aa)). A helical transmembrane segment spans residues 107–127 (FLIVLVVYSAWVSPFEFGFIP). Residues 128 to 136 (KPTGALATA) lie on the Extracellular side of the membrane. Residues 137–157 (DNVVNAFFAVDIILTFFVAYL) form a helical membrane-spanning segment. At 158-178 (DKMSYMLEDDPKKIAWRYSTT) the chain is on the cytoplasmic side. The chain crosses the membrane as a helical span at residues 179–199 (WLVLDVASTIPSEFARRILPS). The Extracellular segment spans residues 200–205 (KLRSYG). Residues 206 to 226 (FFNMLRLWRLRRVSSLFSRLE) form a helical; Voltage-sensor membrane-spanning segment. At 227-240 (KDRHFNYFWVRCAK) the chain is on the cytoplasmic side. The chain crosses the membrane as a helical span at residues 241 to 261 (LICVTLFAVHCAACFYYLLAD). Residues 262–288 (RYPVPTSTWIGNYMADFHERSLWIRYV) are Extracellular-facing. An intramembrane region (pore-forming) is located at residues 289-308 (TSVYWSITTLTTVGYGDLHA). Residues 309 to 312 (ENTR) lie on the Extracellular side of the membrane. The helical transmembrane segment at 313–333 (EMIFNIFYMLFNLGLTAYLIG) threads the bilayer. Topologically, residues 334–935 (NMTNLVVHGT…WDAEKMKGKS (602 aa)) are cytoplasmic. 419–538 (LFQGVSNDLI…TIIMNNLIQF (120 aa)) contacts a nucleoside 3',5'-cyclic phosphate. ANK repeat units follow at residues 565-594 (DLPI…DPNE), 598-627 (DGHT…DPNA), 631-660 (EGKV…DLSS), 662-691 (DTGL…DVNR), 695-724 (DGTT…DIDK), and 728-757 (NGWT…ATAS). The tract at residues 826 to 854 (SQAQRETDHPLSRGGLAATGSPNPSSGSR) is disordered. Polar residues predominate over residues 845 to 854 (GSPNPSSGSR). A KHA domain is found at 859 to 935 (RVTISCPEKG…WDAEKMKGKS (77 aa)).

Belongs to the potassium channel family. Plant (TC 1.A.1.4) subfamily. In terms of assembly, the potassium channel is probably a homo- or heterotetrameric complex of pore-forming subunits. Expressed in roots and coleoptile of young seedlings.

The protein resides in the membrane. In terms of biological role, highly selective inward-rectifying potassium channel that mediates potassium uptake by plant roots. Assuming opened or closed conformations in response to the voltage difference across the membrane, the channel is activated by hyperpolarization. May be a major salt-sensitive potassium channel in roots. This Oryza sativa subsp. japonica (Rice) protein is Potassium channel AKT1 (AKT1).